The chain runs to 403 residues: Tubby-like F-box protein 6 (403 aa).

The 56-residue stretch at 50–105 folds into the F-box domain; that stretch reads SCWAQLPPELLREVLVRIEESEVWWPSRRDVVACAGVCRSWRGITKEIVRVPEASG.

Belongs to the TUB family. As to expression, ubiquitous.

The polypeptide is Tubby-like F-box protein 6 (TULP6) (Oryza sativa subsp. japonica (Rice)).